The chain runs to 199 residues: Protein GrpE (199 aa).

The protein belongs to the GrpE family. In terms of assembly, homodimer.

Its subcellular location is the cytoplasm. Its function is as follows. Participates actively in the response to hyperosmotic and heat shock by preventing the aggregation of stress-denatured proteins, in association with DnaK and GrpE. It is the nucleotide exchange factor for DnaK and may function as a thermosensor. Unfolded proteins bind initially to DnaJ; upon interaction with the DnaJ-bound protein, DnaK hydrolyzes its bound ATP, resulting in the formation of a stable complex. GrpE releases ADP from DnaK; ATP binding to DnaK triggers the release of the substrate protein, thus completing the reaction cycle. Several rounds of ATP-dependent interactions between DnaJ, DnaK and GrpE are required for fully efficient folding. This is Protein GrpE from Fusobacterium nucleatum subsp. nucleatum (strain ATCC 25586 / DSM 15643 / BCRC 10681 / CIP 101130 / JCM 8532 / KCTC 2640 / LMG 13131 / VPI 4355).